The following is a 566-amino-acid chain: Bicarbonate transporter BicA (566 aa).

At 1–15 (MQITNKIHFRNIRGD) the chain is on the cytoplasmic side. The chain crosses the membrane as a helical span at residues 16 to 36 (IFGGLTAAVIALPMALAFGVA). At 37 to 42 (SGAGAE) the chain is on the periplasmic side. The chain crosses the membrane as a helical span at residues 43–63 (AGLWGAVLVGFFAALFGGTPT). A topological domain (cytoplasmic) is located at residue leucine 64. A helical membrane pass occupies residues 65 to 85 (ISEPTGPMTVVMTAVIAHFTA). Threonine 69 provides a ligand contact to hydrogencarbonate. The Periplasmic segment spans residues 86–93 (SAATPEEG). The helical transmembrane segment at 94-114 (LAIAFTVVMMAGVFQIIFGSL) threads the bilayer. The Cytoplasmic portion of the chain corresponds to 115-126 (KLGKYVTMMPYT). A helical transmembrane segment spans residues 127–147 (VISGFMSGIGIILVILQLAPF). Residues 148–169 (LGQASPGGGVIGTLQNLPTLLS) lie on the Periplasmic side of the membrane. A helical transmembrane segment spans residues 170–190 (NIQPGETALALGTVAIIWFMP). At 191 to 196 (EKFKKV) the chain is on the cytoplasmic side. Residues 197–217 (IPPQLVALVLGTVIAFFVFPP) traverse the membrane as a helical segment. The Periplasmic segment spans residues 218-247 (EVSDLRRIGEIRAGFPELVRPSFSPVEFQR). A helical transmembrane segment spans residues 248–268 (MILDAAVLGMLGCIDALLTSV). Na(+) is bound by residues aspartate 262, threonine 266, and glycine 304. Residues 269–318 (VADSLTRTEHNSNKELIGQGLGNLFSGLFGGIAGAGATMGTVVNIQSGGR) are Cytoplasmic-facing. Alanine 305 is a binding site for hydrogencarbonate. Threonine 306 contributes to the Na(+) binding site. The chain crosses the membrane as a helical span at residues 319 to 339 (TALSGLVRAFVLLVVILGAAS). Leucine 340 is a topological domain (periplasmic). A helical membrane pass occupies residues 341 to 361 (TATIPLAVLAGIAFKVGVDII). Residues 362 to 371 (DWSFLKRAHE) lie on the Cytoplasmic side of the membrane. Residues 372–392 (ISPKGALIMYGVILLTVLVDL) form a helical membrane-spanning segment. Residue isoleucine 393 is a topological domain, periplasmic. Residues 394–414 (VAVGVGVFVANVLTIERMSNL) traverse the membrane as a helical segment. Residues 415–566 (QSEKVQTVSD…GVTAPSSEMG (152 aa)) lie on the Cytoplasmic side of the membrane. The region spanning 436 to 546 (KRWLDEGQGR…MSREEALKNA (111 aa)) is the STAS domain.

It belongs to the SLC26A/SulP transporter (TC 2.A.53) family.

It is found in the cell inner membrane. Functionally, low/medium affinity, Na(+)-dependent bicarbonate transporter. The protein is Bicarbonate transporter BicA (bicA) of Picosynechococcus sp. (strain ATCC 27264 / PCC 7002 / PR-6) (Agmenellum quadruplicatum).